Here is a 100-residue protein sequence, read N- to C-terminus: Putative pterin-4-alpha-carbinolamine dehydratase 2 (100 aa).

This sequence belongs to the pterin-4-alpha-carbinolamine dehydratase family.

The enzyme catalyses (4aS,6R)-4a-hydroxy-L-erythro-5,6,7,8-tetrahydrobiopterin = (6R)-L-erythro-6,7-dihydrobiopterin + H2O. The chain is Putative pterin-4-alpha-carbinolamine dehydratase 2 from Cupriavidus pinatubonensis (strain JMP 134 / LMG 1197) (Cupriavidus necator (strain JMP 134)).